The primary structure comprises 767 residues: ATPase family gene 2 protein homolog B (767 aa).

Position 1 is an N-acetylmethionine (Met1). ATP is bound by residues 241 to 248 (GPPGVGKT) and 507 to 514 (GPPGCAKT).

The protein belongs to the AAA ATPase family. AFG2 subfamily. Part of the 55LCC heterohexameric ATPase complex composed at least of AIRIM, AFG2A, AFG2B and CINP. Associates with pre-60S ribosomal particles.

Its subcellular location is the cytoplasm. It is found in the cytoskeleton. It localises to the spindle. The protein resides in the nucleus. It carries out the reaction ATP + H2O = ADP + phosphate + H(+). Its activity is regulated as follows. In the context of 55LCC heterohexameric ATPase complex, the ATPase activity is stimulated by DNA binding and inhibited in presence of RNA. Functionally, ATP-dependent chaperone part of the 55LCC heterohexameric ATPase complex which is chromatin-associated and promotes replisome proteostasis to maintain replication fork progression and genome stability. Required for replication fork progression, sister chromatid cohesion, and chromosome stability. The ATPase activity is specifically enhanced by replication fork DNA and is coupled to cysteine protease-dependent cleavage of replisome substrates in response to replication fork damage. Uses ATPase activity to process replisome substrates in S-phase, facilitating their proteolytic turnover from chromatin to ensure DNA replication and mitotic fidelity. Plays an essential role in the cytoplasmic maturation steps of pre-60S ribosomal particles by promoting the release of shuttling protein RSL24D1/RLP24 from the pre-ribosomal particles. This is ATPase family gene 2 protein homolog B (AFG2B) from Bos taurus (Bovine).